Consider the following 198-residue polypeptide: Single-stranded DNA cytosine deaminase (198 aa).

Positions 1–30 match the Bipartite nuclear localization signal motif; that stretch reads MDSLLMNRRKFLYQFKNVRWAKGRRETYLC. The interaction with SUPT6H stretch occupies residues 2–26; sequence DSLLMNRRKFLYQFKNVRWAKGRRE. The 107-residue stretch at 23 to 129 folds into the CMP/dCMP-type deaminase domain; sequence GRRETYLCYV…KAEPEGLRRL (107 aa). The residue at position 27 (threonine 27) is a Phosphothreonine; by PKA. A Phosphoserine; by PKA modification is found at serine 38. Residues 39–42 form an important for interaction with CTNNBL1 region; sequence ATSF. Residue histidine 56 coordinates Zn(2+). The Proton donor role is filled by glutamate 58. Zn(2+)-binding residues include cysteine 87 and cysteine 90. A required for interaction with RNF126 region spans residues 88-116; it reads YDCARHVADFLRGNPNLSLRIFTARLYFC. The short motif at 183–198 is the Nuclear export signal element; that stretch reads LYEVDDLRDAFRTLGL.

This sequence belongs to the cytidine and deoxycytidylate deaminase family. In terms of assembly, interacts with CTNNBL1; the interaction is important for the immunoglobulin switch activity of AICDA. Interacts (via its NLS) with KPNA1. Interacts with PKA/PRKACA and PRKAR1A/PKR1. Interacts with TRIM28 and NCL. Interacts with SUPT6H. Interacts with RNF126. Directly interacts with MCM3AP; this interaction may favor AICDA recruitment to immunoglobulin variable region genes, hence promoting somatic hypermutations. Zn(2+) serves as cofactor. Ser-38 is the major site whereas Thr-27 is the minor site of phosphorylation. Phosphorylation regulates its class-switch recombination activity. In terms of processing, probably monoubiquitinated on several residues by RNF126. Strongly expressed in lymph nodes and tonsils.

Its subcellular location is the nucleus. The protein localises to the cytoplasm. It localises to the cytosol. The catalysed reaction is a 2'-deoxycytidine in single-stranded DNA + H2O + H(+) = a 2'-deoxyuridine in single-stranded DNA + NH4(+). Single-stranded DNA-specific cytidine deaminase. Involved in somatic hypermutation (SHM), gene conversion, and class-switch recombination (CSR) in B-lymphocytes by deaminating C to U during transcription of Ig-variable (V) and Ig-switch (S) region DNA. Required for several crucial steps of B-cell terminal differentiation necessary for efficient antibody responses. May also play a role in the epigenetic regulation of gene expression by participating in DNA demethylation. The chain is Single-stranded DNA cytosine deaminase (AICDA) from Homo sapiens (Human).